The sequence spans 253 residues: 3-deoxy-manno-octulosonate cytidylyltransferase (253 aa).

Belongs to the KdsB family.

It localises to the cytoplasm. The enzyme catalyses 3-deoxy-alpha-D-manno-oct-2-ulosonate + CTP = CMP-3-deoxy-beta-D-manno-octulosonate + diphosphate. It functions in the pathway nucleotide-sugar biosynthesis; CMP-3-deoxy-D-manno-octulosonate biosynthesis; CMP-3-deoxy-D-manno-octulosonate from 3-deoxy-D-manno-octulosonate and CTP: step 1/1. The protein operates within bacterial outer membrane biogenesis; lipopolysaccharide biosynthesis. Functionally, activates KDO (a required 8-carbon sugar) for incorporation into bacterial lipopolysaccharide in Gram-negative bacteria. In Aeromonas hydrophila subsp. hydrophila (strain ATCC 7966 / DSM 30187 / BCRC 13018 / CCUG 14551 / JCM 1027 / KCTC 2358 / NCIMB 9240 / NCTC 8049), this protein is 3-deoxy-manno-octulosonate cytidylyltransferase.